The sequence spans 63 residues: Prokaryotic ubiquitin-like protein Pup (63 aa).

The segment covering 1–11 (MAQEQTRRGGG) has biased composition (basic and acidic residues). A disordered region spans residues 1-36 (MAQEQTRRGGGGDDDEFTSSTSVGQERREKLTEETD). Positions 20-57 (STSVGQERREKLTEETDDLLDEIDDVLEENAEDFVRAY) are ARC ATPase binding. The stretch at 23 to 51 (VGQERREKLTEETDDLLDEIDDVLEENAE) forms a coiled coil. Position 63 is a deamidated glutamine (glutamine 63). Glutamine 63 is covalently cross-linked (Isoglutamyl lysine isopeptide (Gln-Lys) (interchain with K-? in acceptor proteins)).

It belongs to the prokaryotic ubiquitin-like protein family. Strongly interacts with the proteasome-associated ATPase ARC through a hydrophobic interface; the interacting region of Pup lies in its C-terminal half. There is one Pup binding site per ARC hexamer ring. Post-translationally, is modified by deamidation of its C-terminal glutamine to glutamate by the deamidase Dop, a prerequisite to the subsequent pupylation process.

Its pathway is protein degradation; proteasomal Pup-dependent pathway. In terms of biological role, protein modifier that is covalently attached to lysine residues of substrate proteins, thereby targeting them for proteasomal degradation. The tagging system is termed pupylation. In Mycobacterium leprae (strain Br4923), this protein is Prokaryotic ubiquitin-like protein Pup.